The sequence spans 153 residues: MRLHELSPAPGSRKDRKRVGRGDAGRGNYSGRGMKGQKARSGGATRPGFEGGQLPIYLRLPRKRGFFNPFRIKYAVVNIEQLNMFEAGTEVTPETLLAAGLIRNFVKPVKILSSGHIDRALEVSAHKFSQAAKAQIEAAGGKVQEIDYAAEIE.

Residues 1–47 (MRLHELSPAPGSRKDRKRVGRGDAGRGNYSGRGMKGQKARSGGATRP) are disordered.

The protein belongs to the universal ribosomal protein uL15 family. In terms of assembly, part of the 50S ribosomal subunit.

Functionally, binds to the 23S rRNA. The protein is Large ribosomal subunit protein uL15 of Dehalococcoides mccartyi (strain ATCC BAA-2100 / JCM 16839 / KCTC 5957 / BAV1).